A 169-amino-acid chain; its full sequence is Ribosome maturation factor RimM (169 aa).

Positions 94-168 constitute a PRC barrel domain; the sequence is DDEFYHADLI…RIVADPPEGL (75 aa).

This sequence belongs to the RimM family. As to quaternary structure, binds ribosomal protein uS19.

It is found in the cytoplasm. An accessory protein needed during the final step in the assembly of 30S ribosomal subunit, possibly for assembly of the head region. Essential for efficient processing of 16S rRNA. May be needed both before and after RbfA during the maturation of 16S rRNA. It has affinity for free ribosomal 30S subunits but not for 70S ribosomes. The polypeptide is Ribosome maturation factor RimM (Cereibacter sphaeroides (strain ATCC 17023 / DSM 158 / JCM 6121 / CCUG 31486 / LMG 2827 / NBRC 12203 / NCIMB 8253 / ATH 2.4.1.) (Rhodobacter sphaeroides)).